A 729-amino-acid polypeptide reads, in one-letter code: Disintegrin and metalloproteinase domain-containing protein 21 (729 aa).

Residues 1-39 (MECFIMLGADARTLMRVTLLLLWLKALPSLIDLSQTGST) form the signal peptide. A propeptide spanning residues 40–209 (QYLSSPEVVI…MKQNYGKLWP (170 aa)) is cleaved from the precursor. Asn-169 carries an N-linked (GlcNAc...) asparagine glycan. Residues 176-183 (MLCSLTEK) carry the Cysteine switch motif. Zn(2+) is bound at residue Cys-178. Residues 210–685 (HMWFLELAVV…DSGPTSQKRR (476 aa)) lie on the Extracellular side of the membrane. One can recognise a Peptidase M12B domain in the interval 212 to 402 (WFLELAVVVD…NQGTCLYNHP (191 aa)). Asn-231 carries an N-linked (GlcNAc...) asparagine glycan. Intrachain disulfides connect Cys-320–Cys-397, Cys-360–Cys-382, and Cys-362–Cys-367. His-345 lines the Zn(2+) pocket. Glu-346 is a catalytic residue. His-349 and His-355 together coordinate Zn(2+). Residues Asn-381, Asn-441, and Asn-482 are each glycosylated (N-linked (GlcNAc...) asparagine). The region spanning 410–496 (VKRCGNGMVE…QCPEDGYVQD (87 aa)) is the Disintegrin domain. 4 cysteine pairs are disulfide-bonded: Cys-468/Cys-488, Cys-638/Cys-649, Cys-643/Cys-655, and Cys-657/Cys-666. One can recognise an EGF-like domain in the interval 638 to 667 (CLPETCNRKGVCNNKHHCHCDYGWSPPFCL). A helical membrane pass occupies residues 686–706 (VIITVLSITVPVLSILICLLI). Residues 707–729 (AGLYRIYCKIPSGPKETKASSPG) lie on the Cytoplasmic side of the membrane.

Zn(2+) is required as a cofactor. In terms of processing, has no obvious cleavage site for furin endopeptidase, suggesting that the proteolytic processing is regulated. As to expression, highly expressed in Leydig cells. Expressed also in cauda epididymidis, vas deferens, convoluted tubules, kidney and the parietal cells of stomach. Not detected on developing spermatocytes or mature sperm.

It localises to the membrane. Its function is as follows. May be involved in sperm maturation and/or fertilization. May also be involved in epithelia functions associated with establishing and maintaining gradients of ions or nutrients. The protein is Disintegrin and metalloproteinase domain-containing protein 21 (Adam21) of Mus musculus (Mouse).